The primary structure comprises 307 residues: Glutenin, low molecular weight subunit 1D1 (307 aa).

A signal peptide spans 1–23 (MKTFLVFALLAVAATSAIAQMET). Disordered stretches follow at residues 31 to 88 (RPWQ…ILPQ) and 105 to 126 (PFSQ…QQQQ). Over residues 43–88 (TFPQQPLFSQQQQQQLFPQQPSFSQQQPPFWQQQPPFSQQQPILPQ) the composition is skewed to low complexity.

This sequence belongs to the gliadin/glutenin family. In terms of assembly, disulfide-bridge linked aggregates. In terms of tissue distribution, expressed in endosperm, but not in husk and leaf tissues.

Functionally, glutenins are high-molecular weight seed storage proteins of wheat endosperm. Thought to be responsible for the visco-elastic property of wheat dough. This Triticum aestivum (Wheat) protein is Glutenin, low molecular weight subunit 1D1.